A 92-amino-acid polypeptide reads, in one-letter code: Conotoxin Cal22f (92 aa).

The first 24 residues, 1–24 (MMSTKGITLFLCLLLLALATSVNG), serve as a signal peptide directing secretion. Residues 25–44 (GQGTRRSRMTRALHGGRPSA) constitute a propeptide that is removed on maturation.

Post-translationally, contains 4 disulfide bonds. Expressed by the venom duct.

It is found in the secreted. Its function is as follows. Probable neurotoxin with unknown target. Possibly targets ion channels. This chain is Conotoxin Cal22f, found in Californiconus californicus (California cone).